Reading from the N-terminus, the 85-residue chain is MDNNVDTITLTDEEGKKTEFEVITKLDIEDKEYVVVVPKDEEVDEAIALRIDNNDNGEEVLVPVEEDEEFNMVAEAYELLFSEEQ.

The protein belongs to the UPF0473 family.

This chain is UPF0473 protein CLK_1946, found in Clostridium botulinum (strain Loch Maree / Type A3).